The primary structure comprises 1573 residues: Soluble scavenger receptor cysteine-rich domain-containing protein SSC5D (1573 aa).

A signal peptide spans 1 to 16; that stretch reads MRVLACLLAALVGIQA. Residues 20-120 form the SRCR 1 domain; sequence LRLADGPHGC…HEEDAGVVCA (101 aa). 3 disulfide bridges follow: Cys-45–Cys-109, Cys-58–Cys-119, and Cys-89–Cys-99. The tract at residues 153–192 is disordered; it reads EPLVTHAPRPAGNPQNASRKKSPRPKQAKSTRAPLLTTGA. N-linked (GlcNAc...) asparagine glycosylation is present at Asn-168. Basic residues predominate over residues 170-181; that stretch reads SRKKSPRPKQAK. 2 consecutive SRCR domains span residues 198 to 298 and 304 to 404; these read LRLV…LVCT and LRLA…AVCD. 6 disulfides stabilise this stretch: Cys-223–Cys-287, Cys-236–Cys-297, Cys-267–Cys-277, Cys-329–Cys-393, Cys-342–Cys-403, and Cys-373–Cys-383. N-linked (GlcNAc...) asparagine glycosylation is found at Asn-376 and Asn-420. The interval 412–465 is disordered; it reads PPTAPTDSNNSTPREAASRPPSTMTSQAPGTAGVSPPPASPTVLWEPGPEAGSP. The segment covering 431–440 has biased composition (polar residues); it reads PPSTMTSQAP. An SRCR 4 domain is found at 467–568; the sequence is LRLVAGPSKC…HNEDVGVTCT (102 aa). Intrachain disulfides connect Cys-492/Cys-557, Cys-505/Cys-567, and Cys-537/Cys-547. The segment at 614 to 769 is disordered; sequence EKTTTKAPGK…SVSTTGESGL (156 aa). Residues 626–637 show a composition bias toward basic residues; that stretch reads KSTKKWVTKNAK. The span at 654–671 shows a compositional bias: polar residues; that stretch reads AQSPPDLTSQTTAALTTE. Basic and acidic residues predominate over residues 672 to 685; that stretch reads ASRRPTSEFTRRPT. Polar residues-rich tracts occupy residues 687–702 and 711–735; these read EAPQRWTSHTTATLTP and KTMAMLTTQGPQEMTSESTIKSIPQ. The SRCR 5 domain maps to 772–872; sequence VRLADGPNRC…HEEDVGLTCT (101 aa). Disulfide bonds link Cys-797–Cys-861, Cys-810–Cys-871, and Cys-841–Cys-851. 2 disordered regions span residues 895 to 1475 and 1554 to 1573; these read KGTT…PCVA and MPAPTTTTPEEEERPLRGDV. The segment covering 924 to 934 has biased composition (basic and acidic residues); that stretch reads RLPDTGSKDGY. 2 stretches are compositionally biased toward pro residues: residues 1004-1020 and 1083-1093; these read PPTPSPGPSASPGPPGP and TPEPSPTPLPT. Residues 1101–1140 show a composition bias toward polar residues; sequence DPSTPSEVTSLSPTSEQVPESDTTPDLDTTPYSSTVSEYS. Residues 1144-1160 are compositionally biased toward pro residues; that stretch reads DPSPSPHPTTTPDPTMA. Composition is skewed to low complexity over residues 1161–1175 and 1185–1277; these read PDPITTLNPTVTPHF and PHPT…MPHP. Residues 1278–1328 show a composition bias toward pro residues; it reads TTTPHPTTTPHPTTTPHPTTTPHPTMTPDPTTTPYPTTTPDPTTTPHPTTP. 2 stretches are compositionally biased toward polar residues: residues 1335-1354 and 1364-1380; these read VITTVSLPTSLGTELSSPTL and PQLTFTAPAPHTSTSQI. The span at 1381–1401 shows a compositional bias: low complexity; the sequence is PTLEPSPALESSPSRSSTATS. Positions 1464–1475 are enriched in pro residues; it reads GQSPGPHGPCVA.

In terms of assembly, interacts with LGALS1 and laminin. As to expression, highly expressed in monocytes/macrophages and T-lymphocytes. Highly expressed in placenta and spleen, and also detected at lower levels in colon, and more weakly in lung, heart and kidney.

The protein resides in the secreted. Its subcellular location is the cytoplasm. In terms of biological role, binds to extracellular matrix proteins. Binds to pathogen-associated molecular patterns (PAMPs) present on the cell walls of Gram-positive and Gram-negative bacteria and fungi, behaving as a pattern recognition receptor (PRR). Induces bacterial and fungal aggregation and subsequent inhibition of PAMP-induced cytokine release. Does not possess intrinsic bactericidal activity. May play a role in the innate defense and homeostasis of certain epithelial surfaces. The protein is Soluble scavenger receptor cysteine-rich domain-containing protein SSC5D (SSC5D) of Homo sapiens (Human).